The sequence spans 272 residues: 2-succinyl-6-hydroxy-2,4-cyclohexadiene-1-carboxylate synthase (272 aa).

The protein belongs to the AB hydrolase superfamily. MenH family. In terms of assembly, monomer.

It catalyses the reaction 5-enolpyruvoyl-6-hydroxy-2-succinyl-cyclohex-3-ene-1-carboxylate = (1R,6R)-6-hydroxy-2-succinyl-cyclohexa-2,4-diene-1-carboxylate + pyruvate. Its pathway is quinol/quinone metabolism; 1,4-dihydroxy-2-naphthoate biosynthesis; 1,4-dihydroxy-2-naphthoate from chorismate: step 3/7. The protein operates within quinol/quinone metabolism; menaquinone biosynthesis. Catalyzes a proton abstraction reaction that results in 2,5-elimination of pyruvate from 2-succinyl-5-enolpyruvyl-6-hydroxy-3-cyclohexene-1-carboxylate (SEPHCHC) and the formation of 2-succinyl-6-hydroxy-2,4-cyclohexadiene-1-carboxylate (SHCHC). In Yersinia pseudotuberculosis serotype IB (strain PB1/+), this protein is 2-succinyl-6-hydroxy-2,4-cyclohexadiene-1-carboxylate synthase.